A 314-amino-acid chain; its full sequence is DegV domain-containing protein XAC3508 (314 aa).

Residues 3-307 (IGIVVDSACD…KGALAVGFAA (305 aa)) form the DegV domain. Hexadecanoate-binding residues include Thr63 and Ser96.

Functionally, may bind long-chain fatty acids, such as palmitate, and may play a role in lipid transport or fatty acid metabolism. In Xanthomonas axonopodis pv. citri (strain 306), this protein is DegV domain-containing protein XAC3508.